A 115-amino-acid chain; its full sequence is UPF0597 protein NTHI1023 (115 aa).

Belongs to the UPF0597 family.

The protein is UPF0597 protein NTHI1023 of Haemophilus influenzae (strain 86-028NP).